The primary structure comprises 340 residues: Pseudaminic acid synthase (340 aa).

Positions 281–337 (SLFVIKDIQKGEALTENNIKALRPNLGLHPKFYKEILGQKASKFLKANTPLSADDIE) constitute an AFP-like domain.

This sequence belongs to the pseudaminic acid synthase family. A divalent metal cation is required as a cofactor.

The catalysed reaction is 2,4-diacetamido-2,4,6-trideoxy-beta-L-altrose + phosphoenolpyruvate + H2O = pseudaminate + phosphate. Its function is as follows. Catalyzes the fifth step in the biosynthesis of pseudaminic acid, a sialic-acid-like sugar that is used to modify flagellin. Catalyzes the condensation of phosphoenolpyruvate with 2,4-diacetamido-2,4,6-trideoxy-beta-l-altropyranose, forming pseudaminic acid. The protein is Pseudaminic acid synthase (pseI) of Helicobacter pylori (strain ATCC 700392 / 26695) (Campylobacter pylori).